Reading from the N-terminus, the 1357-residue chain is DNA-directed RNA polymerase subunit beta (1357 aa).

Belongs to the RNA polymerase beta chain family. The RNAP catalytic core consists of 2 alpha, 1 beta, 1 beta' and 1 omega subunit. When a sigma factor is associated with the core the holoenzyme is formed, which can initiate transcription.

It catalyses the reaction RNA(n) + a ribonucleoside 5'-triphosphate = RNA(n+1) + diphosphate. Functionally, DNA-dependent RNA polymerase catalyzes the transcription of DNA into RNA using the four ribonucleoside triphosphates as substrates. This is DNA-directed RNA polymerase subunit beta from Pseudomonas putida (strain W619).